Reading from the N-terminus, the 144-residue chain is Ribonuclease VapC37 (144 aa).

The PINc domain maps to 3–137 (IVDANVLLYA…DFGRFEGVRW (135 aa)). Mg(2+) contacts are provided by Asp5 and Asp90.

It belongs to the PINc/VapC protein family. Requires Mg(2+) as cofactor.

The protein resides in the secreted. Its function is as follows. Probable toxic component of a type II toxin-antitoxin (TA) system. An RNase. Upon expression in M.smegmatis inhibits colony formation. The putative cognate antitoxin is VapB37. In Mycobacterium tuberculosis (strain ATCC 25618 / H37Rv), this protein is Ribonuclease VapC37.